The sequence spans 168 residues: Photosystem I assembly protein Ycf3 (168 aa).

TPR repeat units lie at residues 35-68 (AFAYYINGMSAQSEGNYAEALQNYYQAMHLEMDP), 72-105 (SYILYNIGIIHTSNGEHSKALEYYCRAIERNPFL), and 120-153 (GEQAIQQGDSEIAEAWFDQAAEYWKQARTLTPDN).

Belongs to the Ycf3 family.

Its subcellular location is the plastid membrane. In terms of biological role, essential for the assembly of the photosystem I (PSI) complex. May act as a chaperone-like factor to guide the assembly of the PSI subunits. This Cuscuta obtusiflora (Peruvian dodder) protein is Photosystem I assembly protein Ycf3.